The sequence spans 315 residues: uncharacterized protein (315 aa).

Belongs to the carbohydrate kinase PfkB family.

This is an uncharacterized protein from Escherichia coli (strain K12).